The primary structure comprises 824 residues: MEEKYVPSAVEEKWQGYWAEHKSFKANEDPSRKKYYLLEMFPYPSGKIHMGHVRNYSIGDVIARFKRMQGYNVLHPMGWDAFGMPAENAAIQHKSHPAKWTYENIAYMRGQLKTLGLSYDWDRELATCDLDYYKWEQRIFLEMYKKGLAYKKSSAVNWCPKCETVLANEQVEDGCCWRCDSPVQQKELEQWSFRITNYAQELLDDTYKLTGWPERVLTMQRNWIGRSTGCEIDFPLESGLGKIKVFTTRQDTLFGATFMSLAAEHPMALDLAGDAQKAEVAAFIDKVKKTDRIKRGAEDLEKEGVFTGSYCINPVTNTKMPIYLANFVLMDYGTGAVMAVPTHDQRDFEFAKKYNLPLKVVIQPEGETLDPATMTEAYTAEGIMVNSGRFDGMGNADAKEAIADFLEKEGIGKKTVNFRLRDWGISRQRYWGNPIPVINCDLCGVVAVPEADLPVVLPMDAEFTGEGGNPLARVDSFTTCTCPQCGETARRETDTMDTFVQSSWYFLRYCSPKFSAGPLDREKVEAWMPVDQYIGGIEHAVLHLLYARFFTKVLRDLGYCNVDEPFSNLLTQGMVIKDGAKMSKSKGNVVDPNALIERYGADTARLFSLFAAPPEKDLDWSDQGVDGSYRFLNRVWRLVYDVLPVIGDAGAVNPGELGAEAKKLRRAVHKTIKKVSEDVEERFHFNTAIAAVMELVNAIQAFSAKDAPENVAVVREAVESVVRLLAPFVPNFAEELWFQLGHASVLEAAGWPGYDAAAVVDEEVTVVIQVNGKLRSKLTVAPDAKEEEVRAQALADDKIKPYLEGKDVKKVVYVPGKLVSIVVA.

Positions 42–52 (PYPSGKIHMGH) match the 'HIGH' region motif. Residues 581 to 585 (KMSKS) carry the 'KMSKS' region motif. An ATP-binding site is contributed by Lys584.

This sequence belongs to the class-I aminoacyl-tRNA synthetase family.

The protein localises to the cytoplasm. The catalysed reaction is tRNA(Leu) + L-leucine + ATP = L-leucyl-tRNA(Leu) + AMP + diphosphate. The protein is Leucine--tRNA ligase of Citrifermentans bemidjiense (strain ATCC BAA-1014 / DSM 16622 / JCM 12645 / Bem) (Geobacter bemidjiensis).